The primary structure comprises 300 residues: Nucleotide-binding protein MCCL_0516 (300 aa).

Glycine 15–serine 22 lines the ATP pocket. Position 66 to 69 (aspartate 66 to glycine 69) interacts with GTP.

Belongs to the RapZ-like family.

In terms of biological role, displays ATPase and GTPase activities. This Macrococcus caseolyticus (strain JCSC5402) (Macrococcoides caseolyticum) protein is Nucleotide-binding protein MCCL_0516.